The sequence spans 291 residues: Bifunctional protein FolD (291 aa).

Residues 168-170 (GRG), threonine 195, and valine 236 each bind NADP(+).

Belongs to the tetrahydrofolate dehydrogenase/cyclohydrolase family. In terms of assembly, homodimer.

It catalyses the reaction (6R)-5,10-methylene-5,6,7,8-tetrahydrofolate + NADP(+) = (6R)-5,10-methenyltetrahydrofolate + NADPH. The catalysed reaction is (6R)-5,10-methenyltetrahydrofolate + H2O = (6R)-10-formyltetrahydrofolate + H(+). It functions in the pathway one-carbon metabolism; tetrahydrofolate interconversion. Catalyzes the oxidation of 5,10-methylenetetrahydrofolate to 5,10-methenyltetrahydrofolate and then the hydrolysis of 5,10-methenyltetrahydrofolate to 10-formyltetrahydrofolate. The polypeptide is Bifunctional protein FolD (Bifidobacterium longum (strain DJO10A)).